The primary structure comprises 281 residues: E2F-associated phosphoprotein (281 aa).

Methionine 1 is subject to N-acetylmethionine. A disordered region spans residues 1–27 (MNRLQDDYDPYAVEEPSDEEPALSSSE). Over residues 15–27 (EPSDEEPALSSSE) the composition is skewed to acidic residues. Serine 17 carries the phosphoserine modification. Position 37 is a phosphothreonine (threonine 37). Serine 109 and serine 111 each carry phosphoserine. The interval 222–245 (PENRRKRRSAKKMRSNPEDPAERE) is disordered. Basic residues predominate over residues 225-235 (RRKRRSAKKMR). The span at 236 to 245 (SNPEDPAERE) shows a compositional bias: basic and acidic residues.

In terms of assembly, interacts with E2F1. The C-terminal half binds the N-terminal of E2F1. Also interacts with E2F2 and E2F3, but not E2F4.

The protein localises to the cytoplasm. The protein resides in the nucleus. In terms of biological role, may play an important role in the fine-tuning of both major E2F1 activities, the regulation of the cell-cycle and the induction of apoptosis. Promotes S-phase entry, and inhibits p14(ARP) expression. The sequence is that of E2F-associated phosphoprotein (Eapp) from Mus musculus (Mouse).